A 242-amino-acid chain; its full sequence is Probable L-ribulose-5-phosphate 4-epimerase UlaF (242 aa).

Residues 31 to 32 (GN), 48 to 49 (SG), and 78 to 79 (SS) each bind substrate. Zn(2+)-binding residues include D80, H99, and H101. Residue D124 is the Proton donor/acceptor of the active site. H175 provides a ligand contact to Zn(2+). The Proton donor/acceptor role is filled by Y234.

The protein belongs to the aldolase class II family. AraD/FucA subfamily. The cofactor is Zn(2+).

The enzyme catalyses L-ribulose 5-phosphate = D-xylulose 5-phosphate. It functions in the pathway cofactor degradation; L-ascorbate degradation; D-xylulose 5-phosphate from L-ascorbate: step 4/4. In terms of biological role, catalyzes the isomerization of L-ribulose 5-phosphate to D-xylulose 5-phosphate. Is involved in the anaerobic L-ascorbate utilization. The chain is Probable L-ribulose-5-phosphate 4-epimerase UlaF from Mycoplasma pneumoniae (strain ATCC 29342 / M129 / Subtype 1) (Mycoplasmoides pneumoniae).